We begin with the raw amino-acid sequence, 335 residues long: Peroxidase 53 (335 aa).

The signal sequence occupies residues 1–30; the sequence is MAVTNLPTCDGLFIISLIVIVSSIFGTSSA. Residue glutamine 31 is modified to Pyrrolidone carboxylic acid. Residues asparagine 33 and asparagine 43 are each glycosylated (N-linked (GlcNAc...) asparagine). Disulfide bonds link cysteine 41–cysteine 121, cysteine 74–cysteine 79, cysteine 127–cysteine 329, and cysteine 206–cysteine 238. The Proton acceptor role is filled by histidine 72. Residues aspartate 73, valine 76, glycine 78, aspartate 80, and serine 82 each contribute to the Ca(2+) site. The N-linked (GlcNAc...) asparagine glycan is linked to asparagine 165. Proline 169 contributes to the substrate binding site. Residue asparagine 177 is glycosylated (N-linked (GlcNAc...) asparagine). Heme b is bound at residue histidine 199. Threonine 200 is a Ca(2+) binding site. Residues asparagine 215, asparagine 227, and asparagine 241 are each glycosylated (N-linked (GlcNAc...) asparagine). Aspartate 251, threonine 254, and aspartate 259 together coordinate Ca(2+). Asparagine 297 is a glycosylation site (N-linked (GlcNAc...) asparagine).

The protein belongs to the peroxidase family. Classical plant (class III) peroxidase subfamily. Ca(2+) serves as cofactor. Requires heme b as cofactor. In terms of tissue distribution, mainly expressed in roots.

Its subcellular location is the secreted. The enzyme catalyses 2 a phenolic donor + H2O2 = 2 a phenolic radical donor + 2 H2O. Removal of H(2)O(2), oxidation of toxic reductants, biosynthesis and degradation of lignin, suberization, auxin catabolism, response to environmental stresses such as wounding, pathogen attack and oxidative stress. These functions might be dependent on each isozyme/isoform in each plant tissue. Its function is as follows. Closely linked to lignin formation by showing monolignol substrate specificity. The polypeptide is Peroxidase 53 (PER53) (Arabidopsis thaliana (Mouse-ear cress)).